The sequence spans 200 residues: LHFPL tetraspan subfamily member 6 protein (200 aa).

A signal peptide spans 1 to 23 (MASSLTCTGVIWALLSFLSAATS). 3 helical membrane passes run 84–104 (ICTI…LTAL), 123–143 (GIQF…PLGW), and 166–186 (IGWA…LCTW).

This sequence belongs to the LHFP family.

It localises to the membrane. The sequence is that of LHFPL tetraspan subfamily member 6 protein from Rattus norvegicus (Rat).